The chain runs to 207 residues: Large ribosomal subunit protein uL4 (207 aa).

Residues 53–76 form a disordered region; sequence TVSEVSGTTKKPFKQKGTGNARQG.

The protein belongs to the universal ribosomal protein uL4 family. As to quaternary structure, part of the 50S ribosomal subunit.

Functionally, one of the primary rRNA binding proteins, this protein initially binds near the 5'-end of the 23S rRNA. It is important during the early stages of 50S assembly. It makes multiple contacts with different domains of the 23S rRNA in the assembled 50S subunit and ribosome. Its function is as follows. Forms part of the polypeptide exit tunnel. The sequence is that of Large ribosomal subunit protein uL4 from Rickettsia bellii (strain OSU 85-389).